The primary structure comprises 326 residues: Transcription initiation factor IIB (326 aa).

The segment at 26–57 adopts a TFIIB-type zinc-finger fold; that stretch reads DVEVCPECGSPRLIRDYRRGEFICQDCGLVIE. Positions 30, 33, 49, and 52 each coordinate Zn(2+). Tandem repeats lie at residues 143–226 and 237–318.

The protein belongs to the TFIIB family.

In terms of biological role, stabilizes TBP binding to an archaeal box-A promoter. Also responsible for recruiting RNA polymerase II to the pre-initiation complex (DNA-TBP-TFIIB). The protein is Transcription initiation factor IIB of Archaeoglobus fulgidus (strain ATCC 49558 / DSM 4304 / JCM 9628 / NBRC 100126 / VC-16).